Consider the following 334-residue polypeptide: Fructose-1,6-bisphosphatase class 1 2 (334 aa).

Mg(2+)-binding residues include glutamate 92, aspartate 114, leucine 116, and aspartate 117. Substrate contacts are provided by residues aspartate 117–serine 120, asparagine 208, and lysine 274. Glutamate 280 contributes to the Mg(2+) binding site.

Belongs to the FBPase class 1 family. Homotetramer. Mg(2+) serves as cofactor.

Its subcellular location is the cytoplasm. The enzyme catalyses beta-D-fructose 1,6-bisphosphate + H2O = beta-D-fructose 6-phosphate + phosphate. It functions in the pathway carbohydrate biosynthesis; gluconeogenesis. The chain is Fructose-1,6-bisphosphatase class 1 2 from Albidiferax ferrireducens (strain ATCC BAA-621 / DSM 15236 / T118) (Rhodoferax ferrireducens).